The primary structure comprises 354 residues: Rhodopsin (354 aa).

Residues 1–36 (MNGTEGPNFYVPFSNKSGVVRSPFEYPQYYLAEPWQ) are Extracellular-facing. Residues N2 and N15 are each glycosylated (N-linked (GlcNAc...) asparagine). Residues 37 to 61 (YSVLAAYMFLLILLGFPVNFLTLYV) traverse the membrane as a helical segment. Residues 62–73 (TIQHKKLRTPLN) lie on the Cytoplasmic side of the membrane. A helical transmembrane segment spans residues 74–96 (YILLNLAFANHFMVFGGFPVTMY). Residues 97–110 (SSMHGYFVFGQTGC) are Extracellular-facing. An intrachain disulfide couples C110 to C187. Residues 111–133 (YIEGFFATMGGEIALWSLVVLAI) form a helical membrane-spanning segment. A 'Ionic lock' involved in activated form stabilization motif is present at residues 134–136 (ERY). The Cytoplasmic portion of the chain corresponds to 134–152 (ERYVVVCKPMSNFRFGENH). Residues 153–173 (AIMGVMMTWIMALACAAPPLF) form a helical membrane-spanning segment. Topologically, residues 174–202 (GWSRYIPEGMQCSCGVDYYTLKPEVNNES) are extracellular. The helical transmembrane segment at 203-224 (FVIYMFLVHFTIPLMIIFFCYG) threads the bilayer. At 225–252 (RLVCTVKEAAAQQQESATTQKAEKEVTR) the chain is on the cytoplasmic side. The helical transmembrane segment at 253-274 (MVIIMVVAFLICWVPYASVAFY) threads the bilayer. Topologically, residues 275–286 (IFSNQGTDFGPI) are extracellular. The chain crosses the membrane as a helical span at residues 287 to 308 (FMTVPAFFAKSSAIYNPVIYIV). N6-(retinylidene)lysine is present on K296. The Cytoplasmic segment spans residues 309–354 (LNKQFRNCMITTICCGKNPFGDDETTSAATSKTEASSVSSSQVSPA). S-palmitoyl cysteine attachment occurs at residues C322 and C323. The tract at residues 332-354 (ETTSAATSKTEASSVSSSQVSPA) is disordered. Residues 334–354 (TSAATSKTEASSVSSSQVSPA) show a composition bias toward low complexity.

This sequence belongs to the G-protein coupled receptor 1 family. Opsin subfamily. In terms of processing, contains one covalently linked retinal chromophore. Upon light absorption, the covalently bound 11-cis-retinal is converted to all-trans-retinal. After hydrolysis of the Schiff base and release of the covalently bound all-trans-retinal, active rhodopsin is regenerated by binding of a fresh molecule of 11-cis-retinal.

The protein resides in the membrane. It is found in the cell projection. The protein localises to the cilium. Its subcellular location is the photoreceptor outer segment. In terms of biological role, photoreceptor required for image-forming vision at low light intensity. Required for photoreceptor cell viability after birth. Light-induced isomerization of 11-cis to all-trans retinal triggers a conformational change that activates signaling via G-proteins. Subsequent receptor phosphorylation mediates displacement of the bound G-protein alpha subunit by arrestin and terminates signaling. This Ambystoma tigrinum (Eastern tiger salamander) protein is Rhodopsin (RHO).